The chain runs to 502 residues: Nostrin (502 aa).

Positions 1–260 (MRDPLTDCSY…AISKVDVEKD (260 aa)) constitute an F-BAR domain. Ser-114 is subject to Phosphoserine. Coiled-coil stretches lie at residues 160-230 (SMTQ…LNQY) and 305-335 (KLWR…SSAS). The REM-1 domain maps to 292–372 (PMDKERRKSL…SYKLSTVLAD (81 aa)). The tract at residues 413-437 (KAESKAPAGEQNNPSSSRPGSSVSQ) is disordered. Residues 423–437 (QNNPSSSRPGSSVSQ) show a composition bias toward low complexity. Positions 438–497 (GNNQLCKALYTFQARQDDELNLEKGDIVTIHEKKEEGWWFGSLNGKKGHFPAAYVEELPP) constitute an SH3 domain. The residue at position 479 (Ser-479) is a Phosphoserine.

Homotrimer. Interacts with DAB2. Interacts with NOS3, WASL and CAV1. Interacts (via SH3 domain) with DNM2; this interaction allows the recruitment of NOS3 to dynamin-positive structures. In terms of tissue distribution, over-expressed in brain microcapillaries from spontaneously hypertensive rats.

The protein resides in the cell membrane. Its subcellular location is the cytoplasmic vesicle. It is found in the cytoplasm. It localises to the cytoskeleton. The protein localises to the nucleus. In terms of biological role, multivalent adapter protein which may decrease NOS3 activity by inducing its translocation away from the plasma membrane. In Rattus norvegicus (Rat), this protein is Nostrin.